Here is a 528-residue protein sequence, read N- to C-terminus: Keratin, type II cytoskeletal 78 (528 aa).

Residues 1-104 are head; that stretch reads MSLSPCRARR…DPQFQVVRTQ (104 aa). The segment at 23 to 45 is disordered; sequence VGRGRTGFSSRSLSSFGGCRGGS. Low complexity predominate over residues 24 to 39; the sequence is GRGRTGFSSRSLSSFG. The coil 1A stretch occupies residues 105–140; it reads ETQQIRVLNNQFASFIDKVRFLEQQNKVLETKWHLL. In terms of domain architecture, IF rod spans 105–418; sequence ETQQIRVLNN…RLLEGEECRM (314 aa). Positions 141 to 159 are linker 1; sequence QQQGLSDRPQGLESFFEAY. Residues 160–252 form a coil 1B region; sequence LVRLRTQLEE…LYEEELGQLQ (93 aa). Residues 253-275 are linker 12; that stretch reads TQASDMSVVLSMDNNRCLDFRDL. A coil 2 region spans residues 276–415; that stretch reads IAEVRARYEE…TYRRLLEGEE (140 aa). The tract at residues 416–528 is tail; sequence CRMSGECASQ…ESSLKTSVTY (113 aa).

It belongs to the intermediate filament family. Heterotetramer of two type I and two type II keratins.

This Bos taurus (Bovine) protein is Keratin, type II cytoskeletal 78 (KRT78).